The chain runs to 456 residues: Gustatory receptor for sugar taste 64a (456 aa).

A disordered region spans residues 1-30; the sequence is MKGPNLNFRKTPSKDNGVKQVESLARPETP. The Cytoplasmic portion of the chain corresponds to 1–91; it reads MKGPNLNFRK…RESNPRRVRF (91 aa). Residues 92 to 114 traverse the membrane as a helical segment; the sequence is AYKSIPMFVTLIFMIATSILFLS. Residues 115 to 128 are Extracellular-facing; sequence MFTHLLKIGITAKN. The chain crosses the membrane as a helical span at residues 129–150; that stretch reads FVGLVFFGCVLSAYVVFIRLAK. G131 contacts sucrose. At 151-182 the chain is on the cytoplasmic side; that stretch reads KWPAVVRIWTRTEIPFTKPPYEIPKRNLSRRV. The helical transmembrane segment at 183 to 205 threads the bilayer; it reads QLAALAIIGLSLGEHALYQVSAI. The sucrose site is built by E196, H197, and Y234. Residues E196, H197, Y234, N253, and T257 each contribute to the D-maltose site. Over 206 to 245 the chain is Extracellular; it reads LSYTRRIQMCANITTVPSFNNYMQTNYDYVFQLLPYSPII. A helical transmembrane segment spans residues 246–271; it reads AVLILLINGACTFVWNYMDLFIMMIS. T257 provides a ligand contact to sucrose. Residues 272–318 lie on the Cytoplasmic side of the membrane; that stretch reads KGLSYRFEQITTRIRKLEHEEVCESVFIQIREHYVKMCELLEFVDSA. Residues 319-342 form a helical membrane-spanning segment; the sequence is MSSLILLSCVNNLYFVCYQLLNVF. Residues 343 to 350 lie on the Extracellular side of the membrane; that stretch reads NKLRWPIN. Residues 351–373 form a helical membrane-spanning segment; it reads YIYFWYSLLYLIGRTAFVFLTAA. Y353 is a binding site for sucrose. Y353 contacts D-maltose. Topologically, residues 374–421 are cytoplasmic; that stretch reads DINEESKRGLGVLRRVSSRSWCVEVERLIFQMTTQTVALSGKKFYFLT. The helical transmembrane segment at 422–441 threads the bilayer; that stretch reads RRLLFGMAGTIVTYELVLLQ. Topologically, residues 442 to 456 are extracellular; sequence FDEPNRRKGLQPLCA.

Belongs to the insect chemoreceptor superfamily. Gustatory receptor (GR) family. Gr5a subfamily. In terms of assembly, homotetramer. As to expression, expressed in Gr5a-expressing sugar-sensing cells.

It is found in the cell membrane. Its function is as follows. One of the few identified sugar gustatory receptors identified so far and which promotes the starvation-induced increase of feeding motivation. Required in combination with Gr64f to detect sucrose, maltose, and glucose. The polypeptide is Gustatory receptor for sugar taste 64a (Gr64a) (Drosophila melanogaster (Fruit fly)).